The primary structure comprises 317 residues: MSSKTALLLLQMGGPDSLDAVHPFLMNLFTDRDIIKIGPAFLQPFIARRIVNKRAPKVEEYYRQIGGKSPIRELTEAQGEGLQQLLGEDFRSFVAMRYSRPSTIDALAAIKRAGIERVIALSLYPHYSKATTGSSLNELKRVLKESGAKFEISYIDRFYNHPLYIKALSEKVVQGLASFPDRKDVEIVFSAHSLPQSFIEEGDPYLDHIQETVRLVMEQVGEGSHTLCFQSKASRVKWLEPSTEATIEQMAKAGKKNLLMVPLSFVSDHIETLYEIDIQYGEEAKALGIERFVRSESLNSSPLFLECLADLVKTAAK.

Fe cation is bound by residues His192 and Glu271.

The protein belongs to the ferrochelatase family.

Its subcellular location is the cytoplasm. The catalysed reaction is heme b + 2 H(+) = protoporphyrin IX + Fe(2+). The protein operates within porphyrin-containing compound metabolism; protoheme biosynthesis; protoheme from protoporphyrin-IX: step 1/1. Catalyzes the ferrous insertion into protoporphyrin IX. The sequence is that of Ferrochelatase from Citrifermentans bemidjiense (strain ATCC BAA-1014 / DSM 16622 / JCM 12645 / Bem) (Geobacter bemidjiensis).